The chain runs to 240 residues: UDP-2,3-diacylglucosamine hydrolase (240 aa).

Mn(2+) contacts are provided by Asp9, His11, Asp43, Asn81, and His116. Residue 81 to 82 (NR) participates in substrate binding. Residues Asp124, Ser162, Lys166, Lys169, and His197 each contribute to the substrate site. Positions 197 and 199 each coordinate Mn(2+).

This sequence belongs to the LpxH family. Mn(2+) serves as cofactor.

It localises to the cell inner membrane. It catalyses the reaction UDP-2-N,3-O-bis[(3R)-3-hydroxytetradecanoyl]-alpha-D-glucosamine + H2O = 2-N,3-O-bis[(3R)-3-hydroxytetradecanoyl]-alpha-D-glucosaminyl 1-phosphate + UMP + 2 H(+). Its pathway is glycolipid biosynthesis; lipid IV(A) biosynthesis; lipid IV(A) from (3R)-3-hydroxytetradecanoyl-[acyl-carrier-protein] and UDP-N-acetyl-alpha-D-glucosamine: step 4/6. Its function is as follows. Hydrolyzes the pyrophosphate bond of UDP-2,3-diacylglucosamine to yield 2,3-diacylglucosamine 1-phosphate (lipid X) and UMP by catalyzing the attack of water at the alpha-P atom. Involved in the biosynthesis of lipid A, a phosphorylated glycolipid that anchors the lipopolysaccharide to the outer membrane of the cell. The polypeptide is UDP-2,3-diacylglucosamine hydrolase (Neisseria meningitidis serogroup A / serotype 4A (strain DSM 15465 / Z2491)).